The primary structure comprises 350 residues: MVEFCVLFGGASFEHEISIVSAIALKEVLKDQIKYFIFLDENHHFYLIEASNMHSKYFAQIKEKKLPPLMLTHNGLLKNSFLGAKTIELPLMINLVHGGDGEDGKLASLLEFYRIAFIGSRVEASVLSYNKHLTKLYAKNLGVKTLDCILLNEKNRANALDLIKPSFNFPFIVKPNNAGSSLGVSVVKEEKELAYALDGAFEYSKEVLIEPFIQRVKEYNLAGCKIKEDFCFSYVEEPNKQEFLDFKQKYLDFSRTKAPKANIPNALEEQLRENFKKLYNDLFDGAIIRCDFFVIDNEVYLNEINPIPGSLANYLFDDFKTTLENLAQSLPKTPKIQVKNSYLLQIQKNK.

An ATP-grasp domain is found at 135–335 (KLYAKNLGVK…LAQSLPKTPK (201 aa)). 164 to 219 (KPSFNFPFIVKPNNAGSSLGVSVVKEEKELAYALDGAFEYSKEVLIEPFIQRVKEY) lines the ATP pocket. 3 residues coordinate Mg(2+): D291, E303, and N305.

Belongs to the D-alanine--D-alanine ligase family. Requires Mg(2+) as cofactor. Mn(2+) serves as cofactor.

It is found in the cytoplasm. The enzyme catalyses 2 D-alanine + ATP = D-alanyl-D-alanine + ADP + phosphate + H(+). Its pathway is cell wall biogenesis; peptidoglycan biosynthesis. Its function is as follows. Cell wall formation. This Helicobacter acinonychis (strain Sheeba) protein is D-alanine--D-alanine ligase.